A 316-amino-acid polypeptide reads, in one-letter code: tRNA dimethylallyltransferase (316 aa).

Residue G17 to T24 coordinates ATP. T19–T24 serves as a coordination point for substrate. Interaction with substrate tRNA regions lie at residues D42–L45, Q166–R170, R247–R252, and K280–R287.

This sequence belongs to the IPP transferase family. Monomer. It depends on Mg(2+) as a cofactor.

It catalyses the reaction adenosine(37) in tRNA + dimethylallyl diphosphate = N(6)-dimethylallyladenosine(37) in tRNA + diphosphate. Its function is as follows. Catalyzes the transfer of a dimethylallyl group onto the adenine at position 37 in tRNAs that read codons beginning with uridine, leading to the formation of N6-(dimethylallyl)adenosine (i(6)A). This chain is tRNA dimethylallyltransferase, found in Escherichia coli O45:K1 (strain S88 / ExPEC).